We begin with the raw amino-acid sequence, 287 residues long: Inorganic pyrophosphatase (287 aa).

R79 provides a ligand contact to diphosphate. Mg(2+) is bound by residues D116, D121, and D153. The span at 244 to 258 (NSTLGNSDSVDSSKL) shows a compositional bias: polar residues. The segment at 244-269 (NSTLGNSDSVDSSKLASIPRGENLPP) is disordered.

This sequence belongs to the PPase family. Mg(2+) is required as a cofactor.

The protein resides in the cytoplasm. The enzyme catalyses diphosphate + H2O = 2 phosphate + H(+). Functionally, involved in osmoadaptation. The protein is Inorganic pyrophosphatase (ipp1) of Emericella nidulans (strain FGSC A4 / ATCC 38163 / CBS 112.46 / NRRL 194 / M139) (Aspergillus nidulans).